Here is a 325-residue protein sequence, read N- to C-terminus: Mediator of RNA polymerase II transcription subunit 30 (325 aa).

3 stretches are compositionally biased toward low complexity: residues 1 to 11 (MWKYGQNQGNQ), 109 to 122 (PPQQ…MGPQ), and 132 to 154 (GPQQ…QQQQ). Disordered stretches follow at residues 1–26 (MWKY…MMPM) and 109–176 (PPQQ…LAIS). Gly residues predominate over residues 158–169 (GSGGAPGAGGVG).

Belongs to the Mediator complex subunit 30 family. As to quaternary structure, component of the Mediator complex.

The protein localises to the nucleus. In terms of biological role, component of the Mediator complex, a coactivator involved in the regulated transcription of nearly all RNA polymerase II-dependent genes. Mediator functions as a bridge to convey information from gene-specific regulatory proteins to the basal RNA polymerase II transcription machinery. Mediator is recruited to promoters by direct interactions with regulatory proteins and serves as a scaffold for the assembly of a functional preinitiation complex with RNA polymerase II and the general transcription factors. The polypeptide is Mediator of RNA polymerase II transcription subunit 30 (MED30) (Drosophila pseudoobscura pseudoobscura (Fruit fly)).